The chain runs to 541 residues: Alpha-zingiberene synthase (541 aa).

Residues Asp296, Asp300, Asp437, Thr441, and Glu445 each contribute to the Mg(2+) site. The DDXXD motif motif lies at 296-300; that stretch reads DDIYD.

Belongs to the terpene synthase family. Requires Mg(2+) as cofactor. It depends on Mn(2+) as a cofactor.

The catalysed reaction is (2E,6E)-farnesyl diphosphate = alpha-zingiberene + diphosphate. Its pathway is secondary metabolite biosynthesis; terpenoid biosynthesis. In terms of biological role, sesquiterpene synthase that catalyzes the formation of alpha-zingiberene and other sesquiterpenes from trans,trans-farnesyl diphosphate (FPP). May have an additional monoterpene synthase activity. This Ocimum basilicum (Sweet basil) protein is Alpha-zingiberene synthase (ZIS).